Consider the following 292-residue polypeptide: 4-hydroxy-tetrahydrodipicolinate synthase (292 aa).

Thr-45 serves as a coordination point for pyruvate. The Proton donor/acceptor role is filled by Tyr-133. Residue Lys-161 is the Schiff-base intermediate with substrate of the active site. Ile-203 contributes to the pyruvate binding site.

This sequence belongs to the DapA family. In terms of assembly, homotetramer; dimer of dimers.

Its subcellular location is the cytoplasm. The enzyme catalyses L-aspartate 4-semialdehyde + pyruvate = (2S,4S)-4-hydroxy-2,3,4,5-tetrahydrodipicolinate + H2O + H(+). Its pathway is amino-acid biosynthesis; L-lysine biosynthesis via DAP pathway; (S)-tetrahydrodipicolinate from L-aspartate: step 3/4. Its function is as follows. Catalyzes the condensation of (S)-aspartate-beta-semialdehyde [(S)-ASA] and pyruvate to 4-hydroxy-tetrahydrodipicolinate (HTPA). This is 4-hydroxy-tetrahydrodipicolinate synthase from Klebsiella pneumoniae subsp. pneumoniae (strain ATCC 700721 / MGH 78578).